The sequence spans 530 residues: Light-independent protochlorophyllide reductase subunit B (530 aa).

Asp36 is a binding site for [4Fe-4S] cluster. Asp290 (proton donor) is an active-site residue. 425–426 is a binding site for substrate; sequence GL.

It belongs to the ChlB/BchB/BchZ family. In terms of assembly, protochlorophyllide reductase is composed of three subunits; ChlL, ChlN and ChlB. Forms a heterotetramer of two ChlB and two ChlN subunits. The cofactor is [4Fe-4S] cluster.

It catalyses the reaction chlorophyllide a + oxidized 2[4Fe-4S]-[ferredoxin] + 2 ADP + 2 phosphate = protochlorophyllide a + reduced 2[4Fe-4S]-[ferredoxin] + 2 ATP + 2 H2O. It participates in porphyrin-containing compound metabolism; chlorophyll biosynthesis (light-independent). Functionally, component of the dark-operative protochlorophyllide reductase (DPOR) that uses Mg-ATP and reduced ferredoxin to reduce ring D of protochlorophyllide (Pchlide) to form chlorophyllide a (Chlide). This reaction is light-independent. The NB-protein (ChlN-ChlB) is the catalytic component of the complex. The chain is Light-independent protochlorophyllide reductase subunit B from Synechococcus sp. (strain WH7803).